The primary structure comprises 195 residues: PABIR family member 1 (195 aa).

This sequence belongs to the FAM122 family.

This chain is PABIR family member 1, found in Homo sapiens (Human).